The following is a 645-amino-acid chain: Developmental regulatory protein wetA (645 aa).

5 disordered regions span residues 158–187 (SLHS…RKPK), 201–249 (TNLR…VSPP), 284–376 (YYGQ…QMHW), 461–578 (AQTF…DGAS), and 596–618 (GVAP…DRRR). Residues 240-249 (TQGNLPVSPP) are compositionally biased toward polar residues. Basic residues-rich tracts occupy residues 315–326 (QHHHHPHHHHQQ) and 351–361 (QHQHQHHHQQQ). The segment covering 362-373 (QHHQQQQQQQHQ) has biased composition (low complexity). The span at 509–518 (GPSSSPTPAD) shows a compositional bias: polar residues. The span at 528-546 (SSGASVSSLRSSSGRLPAS) shows a compositional bias: low complexity. Residues 562-572 (ISGSNSATSLG) are compositionally biased toward polar residues.

This sequence belongs to the wetA family.

Functionally, brlA, abaA and wetA are pivotal regulators of conidiophore development and conidium maturation. They act individually and together to regulate their own expression and that of numerous other sporulation-specific genes. BrlA, abaA and wetA act together to positively regulate the expression of the Pks1 gene cluster that mediates the biosynthesis of an anthraquinone derivative pigment that contributes to conidial pigmentation that provides protection from UV radiation, heat and cold stress. The protein is Developmental regulatory protein wetA of Metarhizium robertsii (strain ARSEF 23 / ATCC MYA-3075) (Metarhizium anisopliae (strain ARSEF 23)).